The following is a 361-amino-acid chain: Phosphoserine aminotransferase (361 aa).

Residue Arg42 participates in L-glutamate binding. Residues 76 to 77, Trp102, Thr153, Asp173, and Gln196 contribute to the pyridoxal 5'-phosphate site; that span reads AR. Lys197 is modified (N6-(pyridoxal phosphate)lysine). 238-239 is a binding site for pyridoxal 5'-phosphate; sequence NT.

Belongs to the class-V pyridoxal-phosphate-dependent aminotransferase family. SerC subfamily. In terms of assembly, homodimer. It depends on pyridoxal 5'-phosphate as a cofactor.

The protein localises to the cytoplasm. It carries out the reaction O-phospho-L-serine + 2-oxoglutarate = 3-phosphooxypyruvate + L-glutamate. It catalyses the reaction 4-(phosphooxy)-L-threonine + 2-oxoglutarate = (R)-3-hydroxy-2-oxo-4-phosphooxybutanoate + L-glutamate. Its pathway is amino-acid biosynthesis; L-serine biosynthesis; L-serine from 3-phospho-D-glycerate: step 2/3. The protein operates within cofactor biosynthesis; pyridoxine 5'-phosphate biosynthesis; pyridoxine 5'-phosphate from D-erythrose 4-phosphate: step 3/5. In terms of biological role, catalyzes the reversible conversion of 3-phosphohydroxypyruvate to phosphoserine and of 3-hydroxy-2-oxo-4-phosphonooxybutanoate to phosphohydroxythreonine. This chain is Phosphoserine aminotransferase, found in Buchnera aphidicola subsp. Acyrthosiphon pisum (strain Tuc7).